The chain runs to 481 residues: Glycogen synthase (481 aa).

Lysine 16 contacts ADP-alpha-D-glucose.

It belongs to the glycosyltransferase 1 family. Bacterial/plant glycogen synthase subfamily.

It catalyses the reaction [(1-&gt;4)-alpha-D-glucosyl](n) + ADP-alpha-D-glucose = [(1-&gt;4)-alpha-D-glucosyl](n+1) + ADP + H(+). It functions in the pathway glycan biosynthesis; glycogen biosynthesis. Synthesizes alpha-1,4-glucan chains using ADP-glucose. In Lacticaseibacillus casei (strain BL23) (Lactobacillus casei), this protein is Glycogen synthase.